The sequence spans 125 residues: MGFWKFLPFLVLSFLVVYQAGMFQAAPFRSALENDFDPAILTEKEMCLLLAAVMNDYVQMKTSELKQEAEHFHITAQKRSCNRATCVTHKMAGSLSRSGSEIKRNFMSTNVGSKAFGQRSRDLQK.

A signal peptide spans 1-25 (MGFWKFLPFLVLSFLVVYQAGMFQA). Residues 26-77 (APFRSALENDFDPAILTEKEMCLLLAAVMNDYVQMKTSELKQEAEHFHITAQ) constitute a propeptide that is removed on maturation. The cysteines at positions 81 and 86 are disulfide-linked.

Belongs to the calcitonin family.

The protein resides in the secreted. The polypeptide is Calcitonin receptor-stimulating peptide 2 (CRSP2) (Capra hircus (Goat)).